A 329-amino-acid polypeptide reads, in one-letter code: Methionyl-tRNA formyltransferase (329 aa).

117–120 (SLLP) is a (6S)-5,6,7,8-tetrahydrofolate binding site.

Belongs to the Fmt family.

The enzyme catalyses L-methionyl-tRNA(fMet) + (6R)-10-formyltetrahydrofolate = N-formyl-L-methionyl-tRNA(fMet) + (6S)-5,6,7,8-tetrahydrofolate + H(+). Functionally, attaches a formyl group to the free amino group of methionyl-tRNA(fMet). The formyl group appears to play a dual role in the initiator identity of N-formylmethionyl-tRNA by promoting its recognition by IF2 and preventing the misappropriation of this tRNA by the elongation apparatus. The chain is Methionyl-tRNA formyltransferase from Paracidovorax citrulli (strain AAC00-1) (Acidovorax citrulli).